We begin with the raw amino-acid sequence, 215 residues long: Glycerol-3-phosphate acyltransferase (215 aa).

6 consecutive transmembrane segments (helical) span residues 3–23, 42–61, 68–90, 110–130, 134–154, and 162–182; these read LILL…LWIG, TNTF…LIDI, TLLP…FAVL, AGVL…VFVL, LFSM…ISVL, and LLPG…AIII.

The protein belongs to the PlsY family. In terms of assembly, probably interacts with PlsX.

The protein resides in the cell membrane. The enzyme catalyses an acyl phosphate + sn-glycerol 3-phosphate = a 1-acyl-sn-glycero-3-phosphate + phosphate. It participates in lipid metabolism; phospholipid metabolism. Its function is as follows. Catalyzes the transfer of an acyl group from acyl-phosphate (acyl-PO(4)) to glycerol-3-phosphate (G3P) to form lysophosphatidic acid (LPA). This enzyme utilizes acyl-phosphate as fatty acyl donor, but not acyl-CoA or acyl-ACP. In Streptococcus equi subsp. zooepidemicus (strain H70), this protein is Glycerol-3-phosphate acyltransferase.